The primary structure comprises 273 residues: 5-deoxy-glucuronate isomerase (273 aa).

Belongs to the isomerase IolB family.

It catalyses the reaction 5-deoxy-D-glucuronate = 5-dehydro-2-deoxy-D-gluconate. Its pathway is polyol metabolism; myo-inositol degradation into acetyl-CoA; acetyl-CoA from myo-inositol: step 4/7. Involved in the isomerization of 5-deoxy-glucuronate (5DG) to 5-dehydro-2-deoxy-D-gluconate (DKG or 2-deoxy-5-keto-D-gluconate). In Listeria innocua serovar 6a (strain ATCC BAA-680 / CLIP 11262), this protein is 5-deoxy-glucuronate isomerase.